We begin with the raw amino-acid sequence, 510 residues long: GMP synthase [glutamine-hydrolyzing] (510 aa).

In terms of domain architecture, Glutamine amidotransferase type-1 spans 5-195; sequence LVFIIDFGGQ…LFNICELKGD (191 aa). The active-site Nucleophile is cysteine 82. Residues histidine 169 and glutamate 171 contribute to the active site. The GMPS ATP-PPase domain maps to 196–385; it reads WSVTSFAEEK…LGIPHKLVWR (190 aa). Residue 223 to 229 participates in ATP binding; the sequence is SGGVDSS.

As to quaternary structure, homodimer.

The catalysed reaction is XMP + L-glutamine + ATP + H2O = GMP + L-glutamate + AMP + diphosphate + 2 H(+). It participates in purine metabolism; GMP biosynthesis; GMP from XMP (L-Gln route): step 1/1. Functionally, catalyzes the synthesis of GMP from XMP. This chain is GMP synthase [glutamine-hydrolyzing], found in Clostridium tetani (strain Massachusetts / E88).